We begin with the raw amino-acid sequence, 110 residues long: UPF0060 membrane protein Mmwyl1_1139 (110 aa).

Transmembrane regions (helical) follow at residues 7–27 (ISLFMLTALAEIIGCYLPYLW), 33–53 (TIWLLVPAALSLAVFTWLLTL), 63–83 (AAYGGVYIFMAVLWLWIVDGI), and 87–107 (TWDMIGSAVALLGMAIIMFAP).

Belongs to the UPF0060 family.

The protein resides in the cell inner membrane. The chain is UPF0060 membrane protein Mmwyl1_1139 from Marinomonas sp. (strain MWYL1).